We begin with the raw amino-acid sequence, 184 residues long: Ribosome-recycling factor (184 aa).

It belongs to the RRF family.

It localises to the cytoplasm. Functionally, responsible for the release of ribosomes from messenger RNA at the termination of protein biosynthesis. May increase the efficiency of translation by recycling ribosomes from one round of translation to another. The chain is Ribosome-recycling factor from Clostridium botulinum (strain ATCC 19397 / Type A).